The following is a 294-amino-acid chain: Protease HtpX homolog 2 (294 aa).

The next 2 membrane-spanning stretches (helical) occupy residues 15-35 (MLFT…FLSY) and 37-57 (GTPP…QYFY). H140 provides a ligand contact to Zn(2+). E141 is an active-site residue. H144 is a binding site for Zn(2+). Helical transmembrane passes span 151-171 (AVLT…RYSL) and 185-205 (GGIL…FLLI). Residue E213 participates in Zn(2+) binding.

It belongs to the peptidase M48B family. Zn(2+) serves as cofactor.

The protein resides in the cell membrane. This is Protease HtpX homolog 2 from Methanosarcina acetivorans (strain ATCC 35395 / DSM 2834 / JCM 12185 / C2A).